A 451-amino-acid polypeptide reads, in one-letter code: GTPase Der (451 aa).

EngA-type G domains follow at residues 5 to 170 and 186 to 359; these read PVVA…VAPP and IKLA…AAAF. Residues 11–18, 58–62, 122–125, 192–199, 239–243, and 304–307 contribute to the GTP site; these read GRPNVGKS, DTGGF, NKAE, DTAGL, and NKWD. A KH-like domain is found at 360 to 444; the sequence is AKLSTPRLTR…PLRIEFKSSR (85 aa).

The protein belongs to the TRAFAC class TrmE-Era-EngA-EngB-Septin-like GTPase superfamily. EngA (Der) GTPase family. As to quaternary structure, associates with the 50S ribosomal subunit.

In terms of biological role, GTPase that plays an essential role in the late steps of ribosome biogenesis. In Bordetella bronchiseptica (strain ATCC BAA-588 / NCTC 13252 / RB50) (Alcaligenes bronchisepticus), this protein is GTPase Der.